A 260-amino-acid chain; its full sequence is Vaa serine proteinase homolog 1 (260 aa).

The N-terminal stretch at 1 to 18 (MVLIRVLANLLVLQLSYA) is a signal peptide. The propeptide occupies 19–24 (QKSSEL). The region spanning 25–251 (VIGGDECNIN…YTDWIQSIIA (227 aa)) is the Peptidase S1 domain. Intrachain disulfides connect Cys-31–Cys-165, Cys-52–Cys-68, Cys-100–Cys-258, Cys-144–Cys-212, Cys-176–Cys-191, and Cys-202–Cys-227. Asn-123 is a glycosylation site (N-linked (GlcNAc...) asparagine). Positions 172–186 (DYSVCQKVYRKLPEK) are key residues for binding to FVIIIa. Asn-253 carries N-linked (GlcNAc...) asparagine glycosylation.

It belongs to the peptidase S1 family. Snake venom subfamily. N-glycosylated. The toxin exists in multiple glycoforms. As to expression, expressed by the venom gland.

It is found in the secreted. Functionally, this is the first member of the serine protease family that has strong anticoagulant activity and lacks enzymatic activity. It inhibits activities of three blood coagulation complexes: (1) prothrombinase complex (composed of blood coagulation factors Va and Xa (F5 and F10)) (IC(50)=164.1 nM), (2) intrinsic tenase complex (composed of factors VIIIa and IXa (F8 and F9)), and (3) extrinsic tenase complex (composed of tissue factor and factor VIIa (F7)). The toxin also has been observed to bind prothrombin, factor FVa, non-activated and activated forms of factors FVII (F7) (FVII and FVIIa), factor FVIIIa (F8), factors FIX and FIXa (F9) and factors FX and FXa (F10). The toxin inhibits the activity of the intrinsic tenase complex mainly by competing with FIXa (F9) for binding to FVIIIa (F8). This Vipera ammodytes ammodytes (Western sand viper) protein is Vaa serine proteinase homolog 1.